We begin with the raw amino-acid sequence, 1246 residues long: Respiratory nitrate reductase 2 alpha chain (1246 aa).

Positions 43–107 (DKIVRSTHGV…SYSWYLYSAN (65 aa)) constitute a 4Fe-4S Mo/W bis-MGD-type domain. The [4Fe-4S] cluster site is built by His-50, Cys-54, Cys-58, and Cys-93. A Mo-bis(molybdopterin guanine dinucleotide)-binding site is contributed by Asp-223.

This sequence belongs to the prokaryotic molybdopterin-containing oxidoreductase family. As to quaternary structure, tetramer composed of an alpha, a beta and 2 gamma chains. Alpha and beta are catalytic chains; gamma chain is involved in binding the enzyme complex to the cytoplasmic membrane. The cofactor is [4Fe-4S] cluster. Mo-bis(molybdopterin guanine dinucleotide) is required as a cofactor.

It localises to the cell membrane. It catalyses the reaction nitrate + a quinol = a quinone + nitrite + H2O. Its function is as follows. This is a second nitrate reductase enzyme which can substitute for the NRA enzyme and allows E.coli to use nitrate as an electron acceptor during anaerobic growth. The alpha chain is the actual site of nitrate reduction. The polypeptide is Respiratory nitrate reductase 2 alpha chain (narZ) (Escherichia coli (strain K12)).